The sequence spans 390 residues: Phosphoglycerate kinase (390 aa).

Substrate-binding positions include 21 to 23 (DLN), R36, 59 to 62 (HLGR), R112, and R145. Residues K196, E317, and 343–346 (GGDT) contribute to the ATP site.

Belongs to the phosphoglycerate kinase family. As to quaternary structure, monomer.

It is found in the cytoplasm. It catalyses the reaction (2R)-3-phosphoglycerate + ATP = (2R)-3-phospho-glyceroyl phosphate + ADP. Its pathway is carbohydrate degradation; glycolysis; pyruvate from D-glyceraldehyde 3-phosphate: step 2/5. This is Phosphoglycerate kinase from Cellvibrio japonicus (strain Ueda107) (Pseudomonas fluorescens subsp. cellulosa).